A 601-amino-acid chain; its full sequence is Vesicular glutamate transporter 3 (601 aa).

At 1 to 89 (MPFKAFDTFK…CSCCGIPKRY (89 aa)) the chain is on the cytoplasmic side. Residues 90 to 110 (IIAVMSGLGFCISFGIRCNLG) traverse the membrane as a helical segment. Over 111–143 (VAIVEMVNNSTVYVDGKPEIQTAQFNWDPETVG) the chain is Vesicular. Asn119 is a glycosylation site (N-linked (GlcNAc...) asparagine). A helical transmembrane segment spans residues 144–164 (LIHGSFFWGYIVTQIPGGFIS). Over 165 to 166 (NK) the chain is Cytoplasmic. The helical transmembrane segment at 167–187 (FAASRVFGAAIFLTSTLNMFI) threads the bilayer. Residues 188 to 195 (PSAARVHY) lie on the Vesicular side of the membrane. The chain crosses the membrane as a helical span at residues 196-216 (GCVMGVRILQGLVEGVTYPAC). The Cytoplasmic segment spans residues 217–234 (HGMWSKWAPPLERSRLAT). The chain crosses the membrane as a helical span at residues 235 to 255 (TSFCGSYAGAVVAMPLAGVLV). The Vesicular segment spans residues 256-262 (QYIGWAS). The helical transmembrane segment at 263–283 (VFYIYGMFGIIWYMFWLLQAY) threads the bilayer. Topologically, residues 284 to 327 (ECPAAHPTISNAERTYIETSIGEGANLASLSKFNTPWRRFFTSL) are cytoplasmic. The helical transmembrane segment at 328 to 348 (PVYAIIVANFCRSWTFYLLLI) threads the bilayer. Over 349 to 366 (SQPAYFEEVFGFAISKVG) the chain is Vesicular. Residues 367–387 (LLSAVPHMVMTIVVPIGGQLA) traverse the membrane as a helical segment. The Cytoplasmic portion of the chain corresponds to 388–403 (DYLRSRKILTTTAVRK). The chain crosses the membrane as a helical span at residues 404–424 (IMNCGGFGMEATLLLVVGFSH). The Vesicular segment spans residues 425–426 (TK). Residues 427–447 (GVAISFLVLAVGFSGFAISGF) traverse the membrane as a helical segment. The Cytoplasmic portion of the chain corresponds to 448–460 (NVNHLDIAPRYAS). A helical membrane pass occupies residues 461–481 (ILMGISNGVGTLSGMVCPLIV). Residues 482–494 (GAMTKHKTREEWQ) lie on the Vesicular side of the membrane. The chain crosses the membrane as a helical span at residues 495–515 (NVFLIAALVHYSGVIFYGVFA). The Cytoplasmic segment spans residues 516 to 598 (SGEKQDWADP…LSYQAEGDFS (83 aa)). The tract at residues 576-601 (RQQRESAFDGEEPLSYQAEGDFSETS) is disordered.

It belongs to the major facilitator superfamily. Sodium/anion cotransporter family. VGLUT subfamily. In terms of tissue distribution, expressed in restricted areas of the brain. Highest expression is found in the neurons of the basal forebrain, the hippocampal formation, and the majority of the neurons of the mesencephalic raphe nuclei. Expressed in inner hair cells of the ear.

The protein resides in the cytoplasmic vesicle. The protein localises to the secretory vesicle. It is found in the synaptic vesicle membrane. It localises to the cell membrane. Its subcellular location is the synapse. The protein resides in the synaptosome. It carries out the reaction L-glutamate(out) = L-glutamate(in). The catalysed reaction is 3 Na(+)(out) + phosphate(out) = 3 Na(+)(in) + phosphate(in). The enzyme catalyses chloride(in) = chloride(out). The L-glutamate uniporter activity exhibits a biphasic dependence on chloride concentration. Chloride channel activity is allosterically activated by lumenal H(+) and Cl(-) leading to synaptic vesicles acidification. The L-glutamate transport activity is allosterically activated by lumenal H(+) and Cl(-), preventing non-vesicular L-glutamate release. Its function is as follows. Multifunctional transporter that transports L-glutamate as well as multiple ions such as chloride, sodium and phosphate. At the synaptic vesicle membrane, mainly functions as an uniporter that mediates the uptake of L-glutamate into synaptic vesicles at presynaptic nerve terminals of excitatory neural cells. The L-glutamate uniporter activity is electrogenic and is driven by the proton electrochemical gradient, mainly by the electrical gradient established by the vacuolar H(+)-ATPase across the synaptic vesicle membrane. In addition, functions as a chloride channel that allows a chloride permeation through the synaptic vesicle membrane that affects the proton electrochemical gradient and promotes synaptic vesicles acidification. At the plasma membrane, following exocytosis, functions as a symporter of Na(+) and phosphate from the extracellular space to the cytoplasm allowing synaptic phosphate homeostasis regulation. The symporter activity is electrogenic. Moreover, operates synergistically with SLC18A3/VACHT under a constant H(+) gradient, thereby allowing striatal vesicular acetylcholine uptake. This Mus musculus (Mouse) protein is Vesicular glutamate transporter 3.